The chain runs to 210 residues: Urease accessory protein UreG (210 aa).

A GTP-binding site is contributed by 15–22 (GPVGSGKT).

The protein belongs to the SIMIBI class G3E GTPase family. UreG subfamily. As to quaternary structure, homodimer. UreD, UreF and UreG form a complex that acts as a GTP-hydrolysis-dependent molecular chaperone, activating the urease apoprotein by helping to assemble the nickel containing metallocenter of UreC. The UreE protein probably delivers the nickel.

The protein localises to the cytoplasm. Its function is as follows. Facilitates the functional incorporation of the urease nickel metallocenter. This process requires GTP hydrolysis, probably effectuated by UreG. This Ralstonia nicotianae (strain ATCC BAA-1114 / GMI1000) (Ralstonia solanacearum) protein is Urease accessory protein UreG.